Here is a 313-residue protein sequence, read N- to C-terminus: GTP cyclohydrolase MptA (313 aa).

It belongs to the GTP cyclohydrolase IV family. In terms of assembly, homodimer. It depends on Fe(2+) as a cofactor.

It carries out the reaction GTP + H2O = 7,8-dihydroneopterin 2',3'-cyclic phosphate + formate + diphosphate + H(+). The protein operates within cofactor biosynthesis; 5,6,7,8-tetrahydromethanopterin biosynthesis. Inhibited by GTP concentrations greater than 0.3 mM and by 2-amino-5-formylamino-6-ribofuranosylamino-4(3H)-pyrimidinone 5'-phosphate (fapyGMP). Partial inhibition is observed when 2 mM GMP, dGTP, or 7-methyl-GTP was included along with 2 mM GTP. Its function is as follows. Converts GTP to 7,8-dihydro-D-neopterin 2',3'-cyclic phosphate, the first intermediate in the biosynthesis of coenzyme methanopterin. It is also able to utilize a variety of GTP analogs as substrates, including GDP, beta,gamma-methylene-GTP and GTP-[gamma-thio]. The sequence is that of GTP cyclohydrolase MptA (mptA) from Methanocaldococcus jannaschii (strain ATCC 43067 / DSM 2661 / JAL-1 / JCM 10045 / NBRC 100440) (Methanococcus jannaschii).